Reading from the N-terminus, the 1010-residue chain is 2-oxoglutarate dehydrogenase-like, mitochondrial (1010 aa).

A mitochondrion-targeting transit peptide spans 1-107 (MSQLRLLLFR…RASVSSCTKT (107 aa)). Residues 28 to 47 (GGRRRSSGPPTTIPRSRGGV) form a disordered region. Positions 130, 143, and 145 each coordinate Ca(2+). Arg-299, Asp-398, Asn-431, Ile-433, and Gln-663 together coordinate thiamine diphosphate. Asp-398, Asn-431, and Ile-433 together coordinate Mg(2+).

It belongs to the alpha-ketoglutarate dehydrogenase family. As to quaternary structure, the OGDHC complex comprises multiple copies of three catalytic enzyme components, the 2-oxoglutarate dehydrogenase (OGDH/E1), the dihydrolipoamide dehydrogenase (DLST/E2) and the dihydrolipoamide dehydrogenase (DLD/E3). OGDHL/E1-like isoenzyme may replace OGDH in the OGDHC complex in the brain. The presence of either ODGH/E1 or ODGHL/E1-like isoenzyme in the complex may depend on its tissular distribution. Requires thiamine diphosphate as cofactor. Mg(2+) serves as cofactor. In terms of tissue distribution, the OGDHL-containing OGDHC complex is present in the brain, but not in the heart.

The protein localises to the mitochondrion matrix. The catalysed reaction is N(6)-[(R)-lipoyl]-L-lysyl-[protein] + 2-oxoglutarate + H(+) = N(6)-[(R)-S(8)-succinyldihydrolipoyl]-L-lysyl-[protein] + CO2. 2-oxoglutarate dehydrogenase (E1-like) component of the 2-oxoglutarate dehydrogenase multienzyme complex (OGDHC) which mediates the decarboxylation of alpha-ketoglutarate in the tricarboxylic acid cycle. The OGDHC complex catalyzes the overall conversion of 2-oxoglutarate to succinyl-CoA and CO(2) while reducing NAD(+) to NADH. The OGDHC complex is mainly active in the mitochondrion. Involved in the inhibition of cell proliferation and in apoptosis. The sequence is that of 2-oxoglutarate dehydrogenase-like, mitochondrial from Rattus norvegicus (Rat).